A 563-amino-acid chain; its full sequence is MFPGSTWTVIVEQIAEYEEVIDPKAFFDKIISLWKEYPNAISNRITTSVSVDTDSDLWNEVLRTFETHYKFCPRDCSEIAITKIIHKDLANNKFSDNAFEVSYYEEELLVRFYPITLDGMQHPHFESPYSIAIKIPTDTSIQLQFLKQANSSQEHFEFMKKQAFKQLYTWLKGIDLSKSSRKTNSLLDKESYIKTYRHIREDYGRGMIKGWTENSNPQKSIFEDCGIASYINELVNSDLLPKPNKFVDIGCGNGLLVHLLNKIGMSGYGIDVRHRNIWKTTLKDVDLREMPVDPQIVVQNEPHFDLDVDLLIGNHSDELTPWIPVMAAKLNCNFFLIPCCPFNFFGKYANNGSHLGPKRIVSQYESFFEWTVSVAERLGFDVKIDRLAIPSTKRLCIIGRVPEGGLCPNVDETINSMTEGQKFIARPKEIKTTNCMNIPVTDRERIAKKLFDFVLNYSDAVRDGWRCGGEVPLAQLAALLTEEDKKLMKDQDGGLQTFLRNQHQIFHVYQATARLRDFRQPVVQKRQSWKPKKAETIRKAPCWMSLHHPDGCPVGQEACRYEH.

The C3H1-type zinc-finger motif lies at 536-563 (TIRKAPCWMSLHHPDGCPVGQEACRYEH).

The protein belongs to the TRM44 family.

It is found in the cytoplasm. The enzyme catalyses uridine(44) in tRNA(Ser) + S-adenosyl-L-methionine = 2'-O-methyluridine(44) in tRNA(Ser) + S-adenosyl-L-homocysteine + H(+). In terms of biological role, probable adenosyl-L-methionine (AdoMet)-dependent tRNA (uracil-O(2)-)-methyltransferase. This Caenorhabditis elegans protein is Probable tRNA (uracil-O(2)-)-methyltransferase.